Reading from the N-terminus, the 105-residue chain is Large ribosomal subunit protein eL36 (105 aa).

Lys62 bears the N6-acetyllysine mark.

It belongs to the eukaryotic ribosomal protein eL36 family. In terms of assembly, component of the large ribosomal subunit.

It localises to the cytoplasm. The protein localises to the cytosol. In terms of biological role, component of the large ribosomal subunit. The ribosome is a large ribonucleoprotein complex responsible for the synthesis of proteins in the cell. This Homo sapiens (Human) protein is Large ribosomal subunit protein eL36 (RPL36).